We begin with the raw amino-acid sequence, 382 residues long: F-box/LRR-repeat/kelch-repeat protein At1g09650 (382 aa).

The region spanning 7-52 (CLMMESLPHEVVECILERLDADPLLRFKAVSKQWKSTIESPFFQRR) is the F-box domain. An LRR 1 repeat occupies 78 to 101 (IEALTTLVLGSSSSVKIPTPWEEE). A Kelch 1 repeat occupies 180 to 227 (PVWLYNSIEIGLENATTCEVFDFSTNAWRYVSPAAPYRIVGCPAPVCV). The LRR 2 repeat unit spans residues 239 to 262 (ETKILSFDLHTETFQVVSKAPFAN). Residues 270–319 (MCNLDNRLCVSEMKLPNQVIWSFNSGNKTWHKMCSINLDITSRWFGPTQV) form a Kelch 2 repeat.

The polypeptide is F-box/LRR-repeat/kelch-repeat protein At1g09650 (Arabidopsis thaliana (Mouse-ear cress)).